The sequence spans 202 residues: Small ribosomal subunit protein uS4c (202 aa).

The segment at 20 to 43 is disordered; the sequence is GLTRKTTRRNSRPGQHGDQPRKPS. The 63-residue stretch at 90 to 152 folds into the S4 RNA-binding domain; that stretch reads MRLDNIVFRL…ARSKQLVENY (63 aa).

This sequence belongs to the universal ribosomal protein uS4 family. As to quaternary structure, part of the 30S ribosomal subunit. Contacts protein S5. The interaction surface between S4 and S5 is involved in control of translational fidelity.

Its subcellular location is the plastid. It localises to the chloroplast. One of the primary rRNA binding proteins, it binds directly to 16S rRNA where it nucleates assembly of the body of the 30S subunit. In terms of biological role, with S5 and S12 plays an important role in translational accuracy. The polypeptide is Small ribosomal subunit protein uS4c (rps4) (Rhodomonas salina (Cryptomonas salina)).